We begin with the raw amino-acid sequence, 203 residues long: Large ribosomal subunit protein bL25 (203 aa).

The protein belongs to the bacterial ribosomal protein bL25 family. CTC subfamily. In terms of assembly, part of the 50S ribosomal subunit; part of the 5S rRNA/L5/L18/L25 subcomplex. Contacts the 5S rRNA. Binds to the 5S rRNA independently of L5 and L18.

Functionally, this is one of the proteins that binds to the 5S RNA in the ribosome where it forms part of the central protuberance. This Pseudomonas syringae pv. tomato (strain ATCC BAA-871 / DC3000) protein is Large ribosomal subunit protein bL25.